Here is a 210-residue protein sequence, read N- to C-terminus: Orotate phosphoribosyltransferase (210 aa).

5-phospho-alpha-D-ribose 1-diphosphate-binding positions include Arg96, Lys100, His102, and 122–130; that span reads DDLISTGGS. Ser126 contributes to the orotate binding site.

The protein belongs to the purine/pyrimidine phosphoribosyltransferase family. PyrE subfamily. Homodimer. Mg(2+) serves as cofactor.

The enzyme catalyses orotidine 5'-phosphate + diphosphate = orotate + 5-phospho-alpha-D-ribose 1-diphosphate. It participates in pyrimidine metabolism; UMP biosynthesis via de novo pathway; UMP from orotate: step 1/2. Catalyzes the transfer of a ribosyl phosphate group from 5-phosphoribose 1-diphosphate to orotate, leading to the formation of orotidine monophosphate (OMP). The polypeptide is Orotate phosphoribosyltransferase (Levilactobacillus brevis (strain ATCC 367 / BCRC 12310 / CIP 105137 / JCM 1170 / LMG 11437 / NCIMB 947 / NCTC 947) (Lactobacillus brevis)).